Reading from the N-terminus, the 152-residue chain is Flagellar assembly factor FliW (152 aa).

It belongs to the FliW family. As to quaternary structure, interacts with translational regulator CsrA and flagellin(s).

It is found in the cytoplasm. Its function is as follows. Acts as an anti-CsrA protein, binds CsrA and prevents it from repressing translation of its target genes, one of which is flagellin. Binds to flagellin and participates in the assembly of the flagellum. This is Flagellar assembly factor FliW from Desulfitobacterium hafniense (strain DSM 10664 / DCB-2).